We begin with the raw amino-acid sequence, 1388 residues long: Rho-associated protein kinase 2 (1388 aa).

Residues 1 to 24 (MSRPPPTGKMPGAPEAVSGDGAGA) are disordered. Positions 92 to 354 (YDVVKVIGRG…VEEIKQHPFF (263 aa)) constitute a Protein kinase domain. ATP contacts are provided by residues 98–106 (IGRGAFGEV) and Lys-121. Catalysis depends on Asp-214, which acts as the Proton acceptor. An AGC-kinase C-terminal domain is found at 357-425 (DQWNWDNIRE…YRENLLLSDS (69 aa)). Residues 363 to 784 (NIRETAAPVV…INELLKQKDV (422 aa)) are interaction with PPP1R12A. The tract at residues 373 to 420 (PELSSDIDSSNFDDIEDDKGDVETFPIPKAFVGNQLPFIGFTYYRENL) is interaction with NPM1. Thr-414 is modified (phosphothreonine; by ROCK2). In terms of domain architecture, REM-1 spans 497–573 (ALRQLEREKA…LDETNALLRT (77 aa)). The span at 512 to 530 (NAEYQRKADHEADKKRNLE) shows a compositional bias: basic and acidic residues. Residues 512–532 (NAEYQRKADHEADKKRNLEND) are disordered. Residue Tyr-722 is modified to Phosphotyrosine; by SRC. The 69-residue stretch at 979–1047 (TSDVANLANE…LAEIMNRKEP (69 aa)) folds into the RhoBD domain. The RHOA binding stretch occupies residues 979–1047 (TSDVANLANE…LAEIMNRKEP (69 aa)). The stretch at 1054-1126 (TDMRRKEKEN…EQLRSQLQAL (73 aa)) forms a coiled coil. Position 1137 is a phosphoserine (Ser-1137). In terms of domain architecture, PH spans 1150-1349 (ESRLEGWLSL…WVSRLVKKIP (200 aa)). Thr-1212 bears the Phosphothreonine mark. The Phorbol-ester/DAG-type zinc finger occupies 1260 to 1315 (GHEFIPTLYHFPTNCEACMKPLWHMFKPPPALECRRCHIKCHKDHMDKKEEIIAPC). The interval 1345 to 1388 (VKKIPKKPPAPDPFARSSPRTSMKIQQNQSIRRPSRQLAANKPS) is disordered. Phosphoserine occurs at positions 1362 and 1374. The segment covering 1362–1376 (SPRTSMKIQQNQSIR) has biased composition (polar residues).

Belongs to the protein kinase superfamily. AGC Ser/Thr protein kinase family. Homodimer. Interacts with IRS1. Interacts with RAF1. Interacts with RHOA (activated by GTP), RHOB and RHOC. Interacts with PPP1R12A. Interacts with EP300. Interacts with CHORDC1. Interacts with BRCA2. Interacts with NPM1; this interaction enhances ROCK2 activity. Interacts with SORL1. Interacts with PJVK. Requires Mg(2+) as cofactor. In terms of processing, autophosphorylated. Phosphorylation at Tyr-722 reduces its binding to RHOA and is crucial for focal adhesion dynamics. Dephosphorylation by PTPN11 stimulates its RHOA binding activity. Cleaved by granzyme B during apoptosis. This leads to constitutive activation of the kinase and membrane blebbing.

The protein resides in the cytoplasm. It localises to the cell membrane. Its subcellular location is the nucleus. It is found in the cytoskeleton. The protein localises to the microtubule organizing center. The protein resides in the centrosome. The catalysed reaction is L-seryl-[protein] + ATP = O-phospho-L-seryl-[protein] + ADP + H(+). It catalyses the reaction L-threonyl-[protein] + ATP = O-phospho-L-threonyl-[protein] + ADP + H(+). Activated by RHOA binding. Inhibited by Y-27632. Its function is as follows. Protein kinase which is a key regulator of actin cytoskeleton and cell polarity. Involved in regulation of smooth muscle contraction, actin cytoskeleton organization, stress fiber and focal adhesion formation, neurite retraction, cell adhesion and motility via phosphorylation of ADD1, BRCA2, CNN1, EZR, DPYSL2, EP300, MSN, MYL9/MLC2, NPM1, RDX, PPP1R12A and VIM. Phosphorylates SORL1 and IRF4. Acts as a negative regulator of VEGF-induced angiogenic endothelial cell activation. Positively regulates the activation of p42/MAPK1-p44/MAPK3 and of p90RSK/RPS6KA1 during myogenic differentiation. Plays an important role in the timely initiation of centrosome duplication. Inhibits keratinocyte terminal differentiation. May regulate closure of the eyelids and ventral body wall through organization of actomyosin bundles. Plays a critical role in the regulation of spine and synaptic properties in the hippocampus. Plays an important role in generating the circadian rhythm of the aortic myofilament Ca(2+) sensitivity and vascular contractility by modulating the myosin light chain phosphorylation. The protein is Rho-associated protein kinase 2 (ROCK2) of Sus scrofa (Pig).